The following is a 546-amino-acid chain: Probable protein kinase UbiB (546 aa).

Positions Asp124 to Phe502 constitute a Protein kinase domain. Residues Leu130 to Val138 and Lys153 contribute to the ATP site. Asp288 acts as the Proton acceptor in catalysis. The next 2 membrane-spanning stretches (helical) occupy residues Tyr501 to Pro521 and Glu522 to Trp542.

The protein belongs to the ABC1 family. UbiB subfamily.

Its subcellular location is the cell inner membrane. It functions in the pathway cofactor biosynthesis; ubiquinone biosynthesis [regulation]. Its function is as follows. Is probably a protein kinase regulator of UbiI activity which is involved in aerobic coenzyme Q (ubiquinone) biosynthesis. This Shigella boydii serotype 18 (strain CDC 3083-94 / BS512) protein is Probable protein kinase UbiB.